A 286-amino-acid polypeptide reads, in one-letter code: 2-hydroxy-6-oxo-6-phenylhexa-2,4-dienoate hydrolase (286 aa).

Substrate contacts are provided by residues Gly42–Gly43, Asn51, Asn111, Ser180, and Arg190. His265 functions as the Proton acceptor in the catalytic mechanism. Trp266 serves as a coordination point for substrate.

This sequence belongs to the AB hydrolase superfamily. BphD family. In terms of assembly, homodimer.

It carries out the reaction 2,6-dioxo-6-phenylhexa-3-enoate + H2O = 2-oxopent-4-enoate + benzoate + H(+). The protein operates within xenobiotic degradation; biphenyl degradation; 2-hydroxy-2,4-pentadienoate and benzoate from biphenyl: step 4/4. Its function is as follows. Catalyzes an unusual C-C bond hydrolysis of 2-hydroxy-6-oxo-6-phenylhexa-2,4-dienoic acid (HOPDA) to produce benzoic acid and 2-hydroxy-2,4-pentadienoic acid (HPD). The protein is 2-hydroxy-6-oxo-6-phenylhexa-2,4-dienoate hydrolase of Polaromonas naphthalenivorans (strain CJ2).